Consider the following 129-residue polypeptide: Large ribosomal subunit protein eL32 (129 aa).

It belongs to the eukaryotic ribosomal protein eL32 family.

This is Large ribosomal subunit protein eL32 (rpl32e) from Methanosarcina mazei (strain ATCC BAA-159 / DSM 3647 / Goe1 / Go1 / JCM 11833 / OCM 88) (Methanosarcina frisia).